A 181-amino-acid polypeptide reads, in one-letter code: Protein csk22 (181 aa).

5 helical membrane-spanning segments follow: residues 5–22 (LQSV…YKKI), 35–57 (WLFT…SAIH), 61–78 (YGYL…VFFA), 91–113 (IYFR…RFLY), and 140–162 (LTIG…IIKL).

Its subcellular location is the cell membrane. The protein is Protein csk22 (csk22) of Bacillus subtilis (strain 168).